Here is a 342-residue protein sequence, read N- to C-terminus: Phosphate acyltransferase (342 aa).

Belongs to the PlsX family. As to quaternary structure, homodimer. Probably interacts with PlsY.

It localises to the cytoplasm. It carries out the reaction a fatty acyl-[ACP] + phosphate = an acyl phosphate + holo-[ACP]. It functions in the pathway lipid metabolism; phospholipid metabolism. In terms of biological role, catalyzes the reversible formation of acyl-phosphate (acyl-PO(4)) from acyl-[acyl-carrier-protein] (acyl-ACP). This enzyme utilizes acyl-ACP as fatty acyl donor, but not acyl-CoA. In Shewanella putrefaciens (strain CN-32 / ATCC BAA-453), this protein is Phosphate acyltransferase.